Consider the following 447-residue polypeptide: GTPase Der (447 aa).

EngA-type G domains follow at residues 3–167 (PVIA…ALPE) and 180–353 (IRLA…KSAN). GTP-binding positions include 9–16 (GRPNVGKS), 56–60 (DTGGF), 119–122 (NKAE), 186–193 (GRPNVGKS), 233–237 (DTAGL), and 298–301 (NKWD). A KH-like domain is found at 354–438 (RKMPTPVLTR…PLRIEMKTSS (85 aa)).

The protein belongs to the TRAFAC class TrmE-Era-EngA-EngB-Septin-like GTPase superfamily. EngA (Der) GTPase family. Associates with the 50S ribosomal subunit.

Its function is as follows. GTPase that plays an essential role in the late steps of ribosome biogenesis. In Acidovorax ebreus (strain TPSY) (Diaphorobacter sp. (strain TPSY)), this protein is GTPase Der.